An 81-amino-acid polypeptide reads, in one-letter code: Photosystem I iron-sulfur center (81 aa).

4Fe-4S ferredoxin-type domains are found at residues 2 to 31 (SHSVKIYDTCIGCTQCVRACPTDVLEMIPW) and 39 to 68 (IASAPRTEDCVGCKRCESACPTDFLSVRVY). [4Fe-4S] cluster is bound by residues Cys11, Cys14, Cys17, Cys21, Cys48, Cys51, Cys54, and Cys58.

As to quaternary structure, the eukaryotic PSI reaction center is composed of at least 11 subunits. It depends on [4Fe-4S] cluster as a cofactor.

Its subcellular location is the plastid. It localises to the chloroplast thylakoid membrane. The catalysed reaction is reduced [plastocyanin] + hnu + oxidized [2Fe-2S]-[ferredoxin] = oxidized [plastocyanin] + reduced [2Fe-2S]-[ferredoxin]. In terms of biological role, apoprotein for the two 4Fe-4S centers FA and FB of photosystem I (PSI); essential for photochemical activity. FB is the terminal electron acceptor of PSI, donating electrons to ferredoxin. The C-terminus interacts with PsaA/B/D and helps assemble the protein into the PSI complex. Required for binding of PsaD and PsaE to PSI. PSI is a plastocyanin-ferredoxin oxidoreductase, converting photonic excitation into a charge separation, which transfers an electron from the donor P700 chlorophyll pair to the spectroscopically characterized acceptors A0, A1, FX, FA and FB in turn. The sequence is that of Photosystem I iron-sulfur center from Spinacia oleracea (Spinach).